Here is a 441-residue protein sequence, read N- to C-terminus: 3-phosphoshikimate 1-carboxyvinyltransferase (441 aa).

Residues Lys26, Ser27, and Arg31 each contribute to the 3-phosphoshikimate site. Lys26 serves as a coordination point for phosphoenolpyruvate. Phosphoenolpyruvate-binding residues include Gly99 and Arg127. 3-phosphoshikimate-binding residues include Ser173, Ser174, Gln175, Ser203, Asp320, and Lys347. Gln175 provides a ligand contact to phosphoenolpyruvate. The active-site Proton acceptor is the Asp320. Positions 351, 393, and 423 each coordinate phosphoenolpyruvate.

It belongs to the EPSP synthase family. As to quaternary structure, monomer.

It is found in the cytoplasm. It catalyses the reaction 3-phosphoshikimate + phosphoenolpyruvate = 5-O-(1-carboxyvinyl)-3-phosphoshikimate + phosphate. The protein operates within metabolic intermediate biosynthesis; chorismate biosynthesis; chorismate from D-erythrose 4-phosphate and phosphoenolpyruvate: step 6/7. Its function is as follows. Catalyzes the transfer of the enolpyruvyl moiety of phosphoenolpyruvate (PEP) to the 5-hydroxyl of shikimate-3-phosphate (S3P) to produce enolpyruvyl shikimate-3-phosphate and inorganic phosphate. The sequence is that of 3-phosphoshikimate 1-carboxyvinyltransferase from Janthinobacterium sp. (strain Marseille) (Minibacterium massiliensis).